A 330-amino-acid polypeptide reads, in one-letter code: MLFRFGVVVPPAVAGARQELLLAGSRPELGRWEPHGAVRLRPAGTAAGAAALALQEPGLWLAEVELEAYEEAGGAEPGRVDTFWYKFLQREPGGELHWEGNGPHHDRCCTYNEDNLVDGVYCLPVGHWIEATGHTNEMKHTTDFYFNIAGHQAMHYSRILPNIWLGSCPRQLEHVTIKLKHELGVTAVMNFQTEWDIIQNSSGCNRYPEPMTPDTMMKLYKEEGLSYIWMPTPDMSTEGRVQMLPQAVCLLHALLENGHTVYVHCNAGVGRSTAAVCGWLHYVIGWNLRKVQYFIMAKRPAVYIDEDALAQAQQDFSQKFGKVHSSICAL.

Positions 1 to 123 (MLFRFGVVVP…DNLVDGVYCL (123 aa)) constitute a CBM20 domain. Ser-25 bears the Phosphoserine; by AMPK mark. Substrate is bound by residues Trp-32, Lys-86, 102-106 (GPHHD), Asp-196, Asp-234, and Arg-240. The 168-residue stretch at 155–322 (HYSRILPNIW…QQDFSQKFGK (168 aa)) folds into the Tyrosine-protein phosphatase domain. Residue Cys-265 is the Phosphocysteine intermediate of the active site. The short motif at 265–271 (CNAGVGR) is the Glucan phosphatase signature motif CXAGXGR element. Substrate is bound by residues 266 to 271 (NAGVGR) and Tyr-303.

It belongs to the protein-tyrosine phosphatase family. Homodimer. Interacts with PPP1R3B, PPP1R3C, HIRIP5, and EPM2AIP1. Binds glycogen and Lafora bodies. Interacts with NHLRC1/malin (via the NHL repeats). Forms a complex with NHLRC1/malin and HSP70. Interacts with PPP1R3D; in the presence of NHLC1/malin the interaction leads to ubiquitination and autophagic degradation of PPP1R3D. Interacts (via the phosphatase domain) with MAPT/Tau; the interaction dephosphorylates MAPT. Interacts with PRDM8. Polyubiquitinated by NHLRC1/malin. Post-translationally, phosphorylation on Ser-25 by AMPK affects the phosphatase activity of the enzyme and its ability to homodimerize and interact with NHLRC1, PPP1R3C or PRKAA2. In terms of tissue distribution, detected in skeletal muscle and in brain (at protein level). Widely expressed. Higher levels of expression are found in heart, brain, liver, skeletal muscle and kidney.

The protein localises to the cytoplasm. Its subcellular location is the endoplasmic reticulum membrane. The protein resides in the cell membrane. The enzyme catalyses O-phospho-L-tyrosyl-[protein] + H2O = L-tyrosyl-[protein] + phosphate. It carries out the reaction O-phospho-L-seryl-[protein] + H2O = L-seryl-[protein] + phosphate. The catalysed reaction is O-phospho-L-threonyl-[protein] + H2O = L-threonyl-[protein] + phosphate. Its function is as follows. Plays an important role in preventing glycogen hyperphosphorylation and the formation of insoluble aggregates, via its activity as glycogen phosphatase, and by promoting the ubiquitination of proteins involved in glycogen metabolism via its interaction with the E3 ubiquitin ligase NHLRC1/malin. Dephosphorylates phosphotyrosine and synthetic substrates, such as para-nitrophenylphosphate (pNPP), and has low activity with phosphoserine and phosphothreonine substrates (in vitro). Has also been shown to dephosphorylate MAPT. Shows strong phosphatase activity towards complex carbohydrates in vitro, avoiding glycogen hyperphosphorylation which is associated with reduced branching and formation of insoluble aggregates. Forms a complex with NHLRC1/malin and HSP70, which suppresses the cellular toxicity of misfolded proteins by promoting their degradation through the ubiquitin-proteasome system (UPS). Acts as a scaffold protein to facilitate PPP1R3C/PTG ubiquitination by NHLRC1/malin. Also promotes proteasome-independent protein degradation through the macroautophagy pathway. In Mus musculus (Mouse), this protein is Laforin (Epm2a).